The primary structure comprises 472 residues: Phenylalanine--tRNA ligase, mitochondrial (472 aa).

Substrate is bound by residues 157–160 (SAHQ), Arg179, 186–188 (QHY), and 193–195 (QLE). Residue Lys202 is modified to N6-acetyllysine. Residues Glu287 and Phe312 each coordinate substrate. An FDX-ACB domain is found at 379 to 471 (SKYPAVFNDI…AVQLLGVEGR (93 aa)).

This sequence belongs to the class-II aminoacyl-tRNA synthetase family. Monomer. In terms of tissue distribution, mainly expressed in the Purkinje cell of cerebellum.

The protein localises to the mitochondrion matrix. It is found in the mitochondrion. It catalyses the reaction tRNA(Phe) + L-phenylalanine + ATP = L-phenylalanyl-tRNA(Phe) + AMP + diphosphate + H(+). Is responsible for the charging of tRNA(Phe) with phenylalanine in mitochondrial translation. To a lesser extent, also catalyzes direct attachment of m-Tyr (an oxidized version of Phe) to tRNA(Phe), thereby opening the way for delivery of the misacylated tRNA to the ribosome and incorporation of ROS-damaged amino acid into proteins. This Rattus norvegicus (Rat) protein is Phenylalanine--tRNA ligase, mitochondrial (Fars2).